The primary structure comprises 634 residues: Zinc finger and BTB domain-containing protein 22 (634 aa).

A BTB domain is found at 57–121 (CDVSIRVQGR…AYTGRLSMAA (65 aa)). Disordered stretches follow at residues 167 to 247 (TVPG…APVV) and 308 to 461 (APTP…GTSV). Residues 180–198 (TVAPATMGSARSHASSRAS) show a composition bias toward low complexity. Residues 199-209 (ENQSPSSSNYF) are compositionally biased toward polar residues. The residue at position 202 (serine 202) is a Phosphoserine. A compositionally biased stretch (low complexity) spans 217 to 229 (FSSSSQEAFAASA). Acidic residues predominate over residues 317–340 (PDLEEEEEEEDLVLTCEDDEDEEL). Over residues 452–461 (GAVTVGGTSV) the composition is skewed to low complexity. The C2H2-type 1; atypical zinc finger occupies 486–507 (FLCHCGKAFSHKSMRDRHVNMH). 2 C2H2-type zinc fingers span residues 513–535 (FDCPVCNKKFKMKHHLTEHMKTH) and 541–562 (YECGVCAKKFMWRDSFMRHRGH). Residues 568–634 (RLGGVGAVPG…MGFGGGGGAN (67 aa)) are disordered. Over residues 608–618 (PPSSRRVWSPP) the composition is skewed to low complexity.

It belongs to the krueppel C2H2-type zinc-finger protein family.

It localises to the nucleus. Functionally, may be involved in transcriptional regulation. This chain is Zinc finger and BTB domain-containing protein 22 (ZBTB22), found in Homo sapiens (Human).